Consider the following 549-residue polypeptide: MCDMGGLDNLVANTAYLKAQGGDDKEMKKRRRSLSLPKPEQCASLRTSLDKDFESLCEKQPIGKKLFRQYLSQGGPECTTAAEFLDDLNEWELSESAARDKARTNIINKFCKEGSKSSLTFLTGDVATKCKAVSDKDFEEVMGQVKTATKEFLKGKPFTEYQASPFFDKFLQWKEYEKQPISEKYFYEFRTLGKGGFGEVCAVQVKNTGQMYACKKLCKKRLKKKHGEKMALLEKKILERVNSLFIVSLAYAYDTKTHLCLVMSLMNGGDLKYHIYNIGEKGIEMDRIIYYTAQIATGILHLHDMDIVYRDMKPENVLLDSQGQCRLSDLGLAVEIAVGKTISQKAGTGAYMAPEILNETPYRTSVDWWALGCSIYEMVAGYTPFKGPDAKKEKVEKEEVQRRILNEEPKFEHKNFDAATIDIIKQFLKKKIDERLGCKNDDPRKHEWFKSINFARLEAGLIDPPWVPKPNVVYAKDTGDIAEFSEIKGIEFDAKDDKFFKEFSTGAVSIAWQQEMIDTGLFDELSDPNRKESSGGSDDDKKSGTCTLL.

Ser33 is subject to Phosphoserine. One can recognise an RGS domain in the interval 53 to 171; it reads FESLCEKQPI…QASPFFDKFL (119 aa). The Protein kinase domain occupies 186–449; sequence FYEFRTLGKG…NDDPRKHEWF (264 aa). ATP contacts are provided by residues 192–200 and Lys215; that span reads LGKGGFGEV. Asp311 functions as the Proton acceptor in the catalytic mechanism. In terms of domain architecture, AGC-kinase C-terminal spans 450–515; sequence KSINFARLEA…GAVSIAWQQE (66 aa). The disordered stretch occupies residues 522–549; that stretch reads FDELSDPNRKESSGGSDDDKKSGTCTLL. Residues 527-543 are compositionally biased toward basic and acidic residues; it reads DPNRKESSGGSDDDKKS. Cys546 is subject to Cysteine methyl ester. Cys546 carries the S-geranylgeranyl cysteine lipid modification. The propeptide at 547–549 is removed in mature form; the sequence is TLL.

It belongs to the protein kinase superfamily. AGC Ser/Thr protein kinase family. GPRK subfamily. Post-translationally, phosphorylation at Ser-33 is regulated by light and activated by cAMP.

It localises to the membrane. It carries out the reaction L-threonyl-[rhodopsin] + ATP = O-phospho-L-threonyl-[rhodopsin] + ADP + H(+). It catalyses the reaction L-seryl-[rhodopsin] + ATP = O-phospho-L-seryl-[rhodopsin] + ADP + H(+). Functionally, retina-specific kinase involved in the shutoff of the photoresponse and adaptation to changing light conditions via cone opsin phosphorylation, including rhodopsin (RHO). The chain is Rhodopsin kinase grk7a (grk7a) from Danio rerio (Zebrafish).